Consider the following 594-residue polypeptide: Alanine--tRNA ligase (594 aa).

4 residues coordinate Zn(2+): histidine 456, histidine 460, cysteine 558, and histidine 562.

The protein belongs to the class-II aminoacyl-tRNA synthetase family. Zn(2+) is required as a cofactor.

Its subcellular location is the cytoplasm. It carries out the reaction tRNA(Ala) + L-alanine + ATP = L-alanyl-tRNA(Ala) + AMP + diphosphate. Catalyzes the attachment of alanine to tRNA(Ala) in a two-step reaction: alanine is first activated by ATP to form Ala-AMP and then transferred to the acceptor end of tRNA(Ala). Also edits incorrectly charged Ser-tRNA(Ala) and Gly-tRNA(Ala) via its editing domain. This is Alanine--tRNA ligase (alaS) from Borreliella burgdorferi (strain ATCC 35210 / DSM 4680 / CIP 102532 / B31) (Borrelia burgdorferi).